The primary structure comprises 336 residues: UDP-N-acetylenolpyruvoylglucosamine reductase (336 aa).

The FAD-binding PCMH-type domain occupies 1-178; it reads MAHSLQTLHT…TTVHLALPKE (178 aa). Arginine 154 is a catalytic residue. Serine 222 acts as the Proton donor in catalysis. Glutamate 318 is a catalytic residue.

This sequence belongs to the MurB family. FAD serves as cofactor.

It is found in the cytoplasm. It catalyses the reaction UDP-N-acetyl-alpha-D-muramate + NADP(+) = UDP-N-acetyl-3-O-(1-carboxyvinyl)-alpha-D-glucosamine + NADPH + H(+). The protein operates within cell wall biogenesis; peptidoglycan biosynthesis. Its function is as follows. Cell wall formation. This chain is UDP-N-acetylenolpyruvoylglucosamine reductase, found in Pseudoalteromonas translucida (strain TAC 125).